Here is a 665-residue protein sequence, read N- to C-terminus: Fructose-1,6-bisphosphatase class 3 (665 aa).

It belongs to the FBPase class 3 family. Requires Mn(2+) as cofactor.

The enzyme catalyses beta-D-fructose 1,6-bisphosphate + H2O = beta-D-fructose 6-phosphate + phosphate. It functions in the pathway carbohydrate biosynthesis; gluconeogenesis. This chain is Fructose-1,6-bisphosphatase class 3, found in Clostridium acetobutylicum (strain ATCC 824 / DSM 792 / JCM 1419 / IAM 19013 / LMG 5710 / NBRC 13948 / NRRL B-527 / VKM B-1787 / 2291 / W).